Consider the following 387-residue polypeptide: Succinate--CoA ligase [ADP-forming] subunit beta (387 aa).

The region spanning 9-244 is the ATP-grasp domain; sequence KALLQRYGVN…WSQDDAKEAE (236 aa). Residues Lys46, 53–55, Glu99, Leu102, and Glu107 each bind ATP; that span reads GRG. Mg(2+)-binding residues include Asn199 and Asp213. Substrate contacts are provided by residues Asn264 and 321–323; that span reads GIM.

This sequence belongs to the succinate/malate CoA ligase beta subunit family. In terms of assembly, heterotetramer of two alpha and two beta subunits. The cofactor is Mg(2+).

The catalysed reaction is succinate + ATP + CoA = succinyl-CoA + ADP + phosphate. It carries out the reaction GTP + succinate + CoA = succinyl-CoA + GDP + phosphate. The protein operates within carbohydrate metabolism; tricarboxylic acid cycle; succinate from succinyl-CoA (ligase route): step 1/1. In terms of biological role, succinyl-CoA synthetase functions in the citric acid cycle (TCA), coupling the hydrolysis of succinyl-CoA to the synthesis of either ATP or GTP and thus represents the only step of substrate-level phosphorylation in the TCA. The beta subunit provides nucleotide specificity of the enzyme and binds the substrate succinate, while the binding sites for coenzyme A and phosphate are found in the alpha subunit. The polypeptide is Succinate--CoA ligase [ADP-forming] subunit beta (Methylobacillus flagellatus (strain ATCC 51484 / DSM 6875 / VKM B-1610 / KT)).